A 232-amino-acid chain; its full sequence is 2,3,4,5-tetrahydropyridine-2,6-dicarboxylate N-acetyltransferase (232 aa).

Belongs to the transferase hexapeptide repeat family. DapH subfamily.

The catalysed reaction is (S)-2,3,4,5-tetrahydrodipicolinate + acetyl-CoA + H2O = L-2-acetamido-6-oxoheptanedioate + CoA. It functions in the pathway amino-acid biosynthesis; L-lysine biosynthesis via DAP pathway; LL-2,6-diaminopimelate from (S)-tetrahydrodipicolinate (acetylase route): step 1/3. Its function is as follows. Catalyzes the transfer of an acetyl group from acetyl-CoA to tetrahydrodipicolinate. In Streptococcus uberis (strain ATCC BAA-854 / 0140J), this protein is 2,3,4,5-tetrahydropyridine-2,6-dicarboxylate N-acetyltransferase.